The following is a 409-amino-acid chain: Argininosuccinate synthase (409 aa).

ATP contacts are provided by residues 16-24 (AYSGGLDTS) and A44. L-citrulline is bound by residues Y96 and S101. Residue G126 coordinates ATP. L-aspartate contacts are provided by T128, N132, and D133. L-citrulline is bound at residue N132. Positions 136, 185, 194, 270, and 282 each coordinate L-citrulline.

Belongs to the argininosuccinate synthase family. Type 1 subfamily. As to quaternary structure, homotetramer.

The protein resides in the cytoplasm. The catalysed reaction is L-citrulline + L-aspartate + ATP = 2-(N(omega)-L-arginino)succinate + AMP + diphosphate + H(+). It participates in amino-acid biosynthesis; L-arginine biosynthesis; L-arginine from L-ornithine and carbamoyl phosphate: step 2/3. The chain is Argininosuccinate synthase from Shewanella piezotolerans (strain WP3 / JCM 13877).